Consider the following 241-residue polypeptide: Protein unc-119 homolog B-B (241 aa).

The tract at residues 1 to 46 (MSGSNREAALAGQPKDERKKSGGGVINRLKARRVQGKESGTSDQSS) is disordered. Tyr-132 provides a ligand contact to tetradecanoate.

The protein belongs to the PDE6D/unc-119 family.

Its subcellular location is the cell projection. The protein resides in the cilium. In terms of biological role, myristoyl-binding protein that acts as a cargo adapter: specifically binds the myristoyl moiety of a subset of N-terminally myristoylated proteins and is required for their localization. Plays a key role in localization of proteins to the primary cilium membrane. The sequence is that of Protein unc-119 homolog B-B (unc119b-b) from Xenopus laevis (African clawed frog).